The primary structure comprises 304 residues: MAFQECVIEIAQEQAEAWSDALFDLGALSVSVEDADADTPDEQPLFGEPGLEPTRLAWNRSRVVALFDEETDPALVVTAAANALKVDPVPPYALRGVEDQDWVRLTQSQFEPIRIGEKIWVVPSWHDAPDPDAVILELDPGLAFGTGSHPTTRLCMQWLEANVRAGETVLDYGCGSGILAIVAKKLGAGDTVGIDIDPNAVDASRYNAERNRVEASFALPESVSEATYDLVVANILSNPLKLMAAMLSARVRPGGRLILSGVLERQAEEVAAAYAPWIPMSVWRSEEGWVCLHGTRPAAPADRS.

Residues T152, G173, D195, and N234 each coordinate S-adenosyl-L-methionine.

The protein belongs to the methyltransferase superfamily. PrmA family.

It is found in the cytoplasm. It catalyses the reaction L-lysyl-[protein] + 3 S-adenosyl-L-methionine = N(6),N(6),N(6)-trimethyl-L-lysyl-[protein] + 3 S-adenosyl-L-homocysteine + 3 H(+). Its function is as follows. Methylates ribosomal protein L11. In Cupriavidus metallidurans (strain ATCC 43123 / DSM 2839 / NBRC 102507 / CH34) (Ralstonia metallidurans), this protein is Ribosomal protein L11 methyltransferase.